Consider the following 111-residue polypeptide: Disintegrin piscivostatin-alpha (111 aa).

The signal sequence occupies residues 1–20 (MIQVLLVTICLAVFPYQGSS). A propeptide spanning residues 21-44 (IILESGNVNDYEVVYPRKITPLPK) is cleaved from the precursor. Residues 45-111 (GAVQPKNPCC…GDCPRKHFYA (67 aa)) form the Disintegrin domain. 4 disulfides stabilise this stretch: Cys53-Cys76, Cys67-Cys73, Cys72-Cys97, and Cys85-Cys104. Positions 89–91 (RGD) match the Cell attachment site motif. A propeptide spanning residues 110–111 (YA) is cleaved from the precursor.

Belongs to the disintegrin family. Dimeric disintegrin subfamily. As to quaternary structure, heterodimer with piscivostatin-beta; disulfide-linked. Expressed by the venom gland.

It is found in the secreted. Inhibits fibrinogen interaction with platelets. Acts by binding to alpha-IIb/beta-3 (ITGA2B/ITGB3) on the platelet surface and inhibits both ADP-induced platelet aggregation and platelet aggregate dissociation in human platelet-rich plasma. The sequence is that of Disintegrin piscivostatin-alpha from Agkistrodon piscivorus piscivorus (Eastern cottonmouth).